A 386-amino-acid chain; its full sequence is 3-ketoacyl-CoA thiolase (386 aa).

Cys-91 (acyl-thioester intermediate) is an active-site residue. Active-site proton acceptor residues include His-342 and Cys-372.

The protein belongs to the thiolase-like superfamily. Thiolase family. As to quaternary structure, heterotetramer of two alpha chains (FadB) and two beta chains (FadA).

The protein resides in the cytoplasm. It carries out the reaction an acyl-CoA + acetyl-CoA = a 3-oxoacyl-CoA + CoA. Its pathway is lipid metabolism; fatty acid beta-oxidation. Its function is as follows. Catalyzes the final step of fatty acid oxidation in which acetyl-CoA is released and the CoA ester of a fatty acid two carbons shorter is formed. The sequence is that of 3-ketoacyl-CoA thiolase from Pseudoalteromonas atlantica (strain T6c / ATCC BAA-1087).